The primary structure comprises 181 residues: Oligoribonuclease (181 aa).

Residues Leu8–Leu171 form the Exonuclease domain. Residue Tyr129 is part of the active site.

This sequence belongs to the oligoribonuclease family.

It localises to the cytoplasm. In terms of biological role, 3'-to-5' exoribonuclease specific for small oligoribonucleotides. The polypeptide is Oligoribonuclease (Colwellia psychrerythraea (strain 34H / ATCC BAA-681) (Vibrio psychroerythus)).